Here is a 199-residue protein sequence, read N- to C-terminus: Recombination protein RecR (199 aa).

The segment at 58 to 73 adopts a C4-type zinc-finger fold; the sequence is CKKCFNLTSEDECEIC. Residues 81-175 enclose the Toprim domain; it reads KLICVVAETK…KVTRIAYGLP (95 aa).

It belongs to the RecR family.

Its function is as follows. May play a role in DNA repair. It seems to be involved in an RecBC-independent recombinational process of DNA repair. It may act with RecF and RecO. The chain is Recombination protein RecR from Prochlorococcus marinus (strain MIT 9301).